A 278-amino-acid chain; its full sequence is Elongation factor Ts (278 aa).

Residues 82–85 form an involved in Mg(2+) ion dislocation from EF-Tu region; it reads TDFV.

It belongs to the EF-Ts family.

It is found in the cytoplasm. Functionally, associates with the EF-Tu.GDP complex and induces the exchange of GDP to GTP. It remains bound to the aminoacyl-tRNA.EF-Tu.GTP complex up to the GTP hydrolysis stage on the ribosome. The sequence is that of Elongation factor Ts from Streptomyces griseus subsp. griseus (strain JCM 4626 / CBS 651.72 / NBRC 13350 / KCC S-0626 / ISP 5235).